Consider the following 155-residue polypeptide: 2-C-methyl-D-erythritol 2,4-cyclodiphosphate synthase (155 aa).

A divalent metal cation contacts are provided by aspartate 8 and histidine 10. 4-CDP-2-C-methyl-D-erythritol 2-phosphate-binding positions include 8–10 and 34–35; these read DVH and HS. Histidine 42 serves as a coordination point for a divalent metal cation. Residues 56–58, 61–65, 100–106, 132–135, phenylalanine 139, and lysine 142 contribute to the 4-CDP-2-C-methyl-D-erythritol 2-phosphate site; these read DIG, FPDSD, AQKPKML, and TTEE.

Belongs to the IspF family. In terms of assembly, homotrimer. It depends on a divalent metal cation as a cofactor.

It carries out the reaction 4-CDP-2-C-methyl-D-erythritol 2-phosphate = 2-C-methyl-D-erythritol 2,4-cyclic diphosphate + CMP. Its pathway is isoprenoid biosynthesis; isopentenyl diphosphate biosynthesis via DXP pathway; isopentenyl diphosphate from 1-deoxy-D-xylulose 5-phosphate: step 4/6. In terms of biological role, involved in the biosynthesis of isopentenyl diphosphate (IPP) and dimethylallyl diphosphate (DMAPP), two major building blocks of isoprenoid compounds. Catalyzes the conversion of 4-diphosphocytidyl-2-C-methyl-D-erythritol 2-phosphate (CDP-ME2P) to 2-C-methyl-D-erythritol 2,4-cyclodiphosphate (ME-CPP) with a corresponding release of cytidine 5-monophosphate (CMP). The sequence is that of 2-C-methyl-D-erythritol 2,4-cyclodiphosphate synthase from Clostridium botulinum (strain Kyoto / Type A2).